A 129-amino-acid polypeptide reads, in one-letter code: Protein UL131A (129 aa).

The N-terminal stretch at M1–G18 is a signal peptide.

Forms the envelope pentamer complex (PC) composed of gH, gL, UL128, UL130, and UL131A. The pentamer interacts with host NRP2. The interaction with gH is important for the formation of UL128, UL130, gH-gL complex.

It localises to the virion membrane. In terms of biological role, plays a role in viral entry into host cells. Forms a pentameric complex at the surface of the viral envelope together with gH, gL, UL130 and UL131. This complex is required for entry in epithelial, endothelial and myeloid host cells. Mechanistically, engages host receptor(s) including neurophilin 2/NRP2 to mediate infection. Contributes to the formation of the complex between UL128, UL130 and gH-gL. This Human cytomegalovirus (strain Merlin) (HHV-5) protein is Protein UL131A (UL131A).